A 200-amino-acid polypeptide reads, in one-letter code: MVHAFLIHTLRAPNTEDTGLCRVLYSCVFGAEKSPDDPRPHGAERDRLLRKEQILAVARQVESMCRLQQQASGRPPMDLQPQSSDEQVPLHEAPRGAFRLAAENPFQEPRTVVWLGVLSLGFALVLDAHENLLLAEGTLRLLTRLLLDHLRLLAPSTSLLLRADRIEGILTRFLPHGQLLFLNDQFVQGLEKEFSAAWPR.

As to quaternary structure, probably part of the adaptor protein complex 5 (AP-5) a tetramer composed of AP5B1, AP5M1, AP5S1 and AP5Z1. Interacts with ZFYVE26 and SPG11.

It is found in the cytoplasm. It localises to the cytosol. Its subcellular location is the late endosome membrane. The protein resides in the lysosome membrane. Its function is as follows. As part of AP-5, a probable fifth adaptor protein complex it may be involved in endosomal transport. According to PubMed:20613862, it is required for efficient homologous recombination DNA double-strand break repair. The sequence is that of AP-5 complex subunit sigma-1 (AP5S1) from Homo sapiens (Human).